Consider the following 1347-residue polypeptide: Protocadherin-11 X-linked (1347 aa).

A signal peptide spans 1 to 23 (MDLLSGTYIFAVLLACVVFHSGA). Topologically, residues 24-812 (QEKNYTIREE…VSSPTSDYVK (789 aa)) are extracellular. Cadherin domains are found at residues 26 to 139 (KNYT…APLF), 140 to 249 (PATV…HPVF), 250 to 355 (KETE…VPSI), 362 to 466 (NPIN…APVF), 467 to 570 (TQSF…SPVF), 571 to 673 (THNE…KPVF), and 677 to 795 (PSNY…APVT). N-linked (GlcNAc...) asparagine glycosylation is found at Asn-27, Asn-48, and Asn-54. The N-linked (GlcNAc...) asparagine glycan is linked to Asn-344. Asn-553 carries N-linked (GlcNAc...) asparagine glycosylation. N-linked (GlcNAc...) asparagine glycosylation is present at Asn-773. The chain crosses the membrane as a helical span at residues 813 to 833 (ILVAAVAGTVTVVVVIFITAV). The Cytoplasmic segment spans residues 834-1347 (VRCRQAPHLK…DSPIMEEHPL (514 aa)). Disordered regions lie at residues 1031 to 1050 (IWIH…GKSQ), 1057 to 1091 (LPEG…GYPQ), 1097 to 1116 (RATP…ESTF), and 1325 to 1347 (TFTP…EHPL).

The protein localises to the cell membrane. Its function is as follows. Potential calcium-dependent cell-adhesion protein. The chain is Protocadherin-11 X-linked (PCDH11X) from Pongo pygmaeus (Bornean orangutan).